The primary structure comprises 627 residues: Carnitine O-acetyltransferase, mitochondrial (627 aa).

The active-site Proton acceptor is the His336. Residues Lys418 and 422-429 (KKFKVSPD) each bind CoA. Residues Tyr451, Ser453, and Thr464 each coordinate (R)-carnitine. Residue Gln553 coordinates CoA. The Microbody targeting signal signature appears at 625–627 (PKL).

It belongs to the carnitine/choline acetyltransferase family.

The protein localises to the peroxisome. Its subcellular location is the mitochondrion inner membrane. It carries out the reaction (R)-carnitine + acetyl-CoA = O-acetyl-(R)-carnitine + CoA. Its function is as follows. Carnitine acetylase is specific for short chain fatty acids. Carnitine acetylase seems to affect the flux through the pyruvate dehydrogenase complex. It may be involved as well in the transport of acetyl-CoA into mitochondria. The protein is Carnitine O-acetyltransferase, mitochondrial (CAT2) of Candida tropicalis (Yeast).